Consider the following 245-residue polypeptide: Geranylgeranylglyceryl phosphate synthase (245 aa).

Mg(2+) contacts are provided by D22 and S51. Sn-glycerol 1-phosphate is bound by residues 169-175 (YLEAGSG), 200-201 (GG), and 222-223 (GT).

The protein belongs to the GGGP/HepGP synthase family. Group II subfamily. As to quaternary structure, homotetramer. Homohexamer. Mg(2+) serves as cofactor.

The protein resides in the cytoplasm. The catalysed reaction is sn-glycerol 1-phosphate + (2E,6E,10E)-geranylgeranyl diphosphate = sn-3-O-(geranylgeranyl)glycerol 1-phosphate + diphosphate. Its pathway is membrane lipid metabolism; glycerophospholipid metabolism. Its function is as follows. Prenyltransferase that catalyzes the transfer of the geranylgeranyl moiety of geranylgeranyl diphosphate (GGPP) to the C3 hydroxyl of sn-glycerol-1-phosphate (G1P). This reaction is the first ether-bond-formation step in the biosynthesis of archaeal membrane lipids. The polypeptide is Geranylgeranylglyceryl phosphate synthase (Methanothermobacter thermautotrophicus (strain ATCC 29096 / DSM 1053 / JCM 10044 / NBRC 100330 / Delta H) (Methanobacterium thermoautotrophicum)).